Reading from the N-terminus, the 311-residue chain is Avirulence protein ATR1 (311 aa).

The N-terminal stretch at 1 to 15 (MRVCYFVLVPSVALA) is a signal peptide. The RxLR-dEER signature appears at 48–62 (RALRAQTALDDDEER). WY domain stretches follow at residues 127–209 (DEAL…VKCV) and 210–311 (ESED…IYSV).

This sequence belongs to the RxLR effector family. In terms of assembly, monomer. Interacts with defense protein RPP1 from several ecotypes including RPP1-NdA, RPP1-WsB, RPP1-EstA and RPP1-ZdrA, via their leucine-rich repeats (LLRs).

It localises to the secreted. It is found in the host cytoplasm. In terms of biological role, secreted effector that acts as an elicitor of hypersensitive response (HR) specifically on plants carrying both defense protein RPP1 from several ecotypes including RPP1-NdA, RPP1-WsB, RPP1-EstA and RPP1-ZdrA. The protein is Avirulence protein ATR1 of Hyaloperonospora arabidopsidis (strain Emoy2) (Downy mildew agent).